Consider the following 612-residue polypeptide: E3 ubiquitin-protein ligase synoviolin (612 aa).

Residues 1–4 (MFRT) lie on the Cytoplasmic side of the membrane. Residues 1–251 (MFRTAVMMAA…LFAIRPMYLA (251 aa)) are involved in FAM8A1 interaction. Residues 5-25 (AVMMAASLALTGAVVAHAYYL) form a helical membrane-spanning segment. Residues 21-42 (HAYYLKHQFYPTVVYLTKSSPS) are interaction with SEL1L. The Lumenal segment spans residues 26–41 (KHQFYPTVVYLTKSSP). Residues 42–62 (SMAVLYIQAFVLVFLLGKVMG) traverse the membrane as a helical segment. Over 63-98 (KVFFGQLRAAEMEHLLERSWYAVTETCLAFTVFRDD) the chain is Cytoplasmic. The chain crosses the membrane as a helical span at residues 99-119 (FSPRFVALFTLLLFLKCFHWL). Topologically, residues 120–140 (AEDRVDFMERSPNISWLFHCR) are lumenal. The helical transmembrane segment at 141 to 161 (IVSLMFLLGILDFLFVSHAYH) threads the bilayer. At 162–169 (SILTRGAS) the chain is on the cytoplasmic side. Residues 170-190 (VQLVFGFEYAILMTMVLTIFI) traverse the membrane as a helical segment. Topologically, residues 191 to 224 (KYVLHSVDLQSENPWDNKAVYMLYTELFTGFIKV) are lumenal. The chain crosses the membrane as a helical span at residues 225–245 (LLYMAFMTIMIKVHTFPLFAI). Residues 236–270 (KVHTFPLFAIRPMYLAMRQFKKAVTDAIMSRRAIR) form an interaction with p53/TP53 region. At 246–612 (RPMYLAMRQF…LQKLESPVAH (367 aa)) the chain is on the cytoplasmic side. Zn(2+)-binding residues include Cys-291, Cys-294, Cys-307, His-309, His-312, Cys-315, Cys-326, and Cys-329. The RING-type; atypical zinc-finger motif lies at 291–330 (CIICREEMVTGAKRLPCNHIFHTSCLRSWFQRQQTCPTCR). Disordered regions lie at residues 337–375 (SLPA…GLLP) and 393–449 (PVPP…PGFP). Composition is skewed to pro residues over residues 341-375 (QSPP…GLLP) and 393-409 (PVPP…PPPT). Positions 416-434 (PSGAATTTAAGTSTSAPAP) are enriched in low complexity. The segment covering 435–449 (GSVPGPEAGPAPGFP) has biased composition (pro residues). The tract at residues 474 to 529 (GFAGLTPEELRALEGHERQHLEARLQSLRNIHTLLDAAMLQINQYLTVLASLGPPR) is HAF-H domain; necessary to form higher-order Hrd1 complexes. Residues 530–612 (PATSVNPTEE…LQKLESPVAH (83 aa)) form a disordered region. Positions 539–559 (ETASTVVSAAPSTSAPSSEAP) are enriched in low complexity. Positions 560-570 (TPSPGASPPIP) are enriched in pro residues. Over residues 586–595 (ELPEDGEPDA) the composition is skewed to acidic residues. Ser-608 is modified (phosphoserine).

It belongs to the HRD1 family. In terms of assembly, homodimer. Interacts with p53/TP53. Interacts with HTT. Component of the HRD1 complex, which comprises at least SYNV1/HRD1, DERL1/2, FAM8A1, HERPUD1/HERP, OS9, SEL1L and UBE2J1. FAM8A1 is stabilized by interaction with SYNV1, which prevents its proteasomal degradation. OS9 and UBE2J1 recruitment to the complex may be mediated by SEL1L. SYNV1 assembles with SEL1L and FAM8A1 through its transmembrane domains, but interaction with its cytoplasmic domain is required to confer stability to FAM8A1 and enhance recruitment of HERPUD1. The HRD1 complex also associates with VIMP and may transfer misfolded proteins from the endoplasmic reticulum to VCP. May form a complex with ERLEC1; HSPA5; OS9 and SEL1L. Interacts with VCP. Interacts with UBXN6. Interacts with BAG6. Interacts with NFE2L1. Interacts (via N-terminus) with components of the pre-B cell receptor, including IGLL1 and VPREB1A. Interacts with CREB3L3; this interaction leads to CREB3L3 ubiquitination and proteasomal degradation. Post-translationally, auto-ubiquitinated. Deubiquitinated by USP19. As to expression, widely expressed, with highest levels in bone, spleen, lung and testis. In the brain, present in neurons but not in glial cells. Up-regulated in synovial tissues from mice with collagen-induced arthritis (at protein level). Expressed in the liver.

Its subcellular location is the endoplasmic reticulum membrane. The catalysed reaction is S-ubiquitinyl-[E2 ubiquitin-conjugating enzyme]-L-cysteine + [acceptor protein]-L-lysine = [E2 ubiquitin-conjugating enzyme]-L-cysteine + N(6)-ubiquitinyl-[acceptor protein]-L-lysine.. Its pathway is protein modification; protein ubiquitination. In terms of biological role, E3 ubiquitin-protein ligase which accepts ubiquitin specifically from endoplasmic reticulum-associated UBC7 E2 ligase and transfers it to substrates, promoting their degradation. Component of the endoplasmic reticulum quality control (ERQC) system also called ER-associated degradation (ERAD) involved in ubiquitin-dependent degradation of misfolded endoplasmic reticulum proteins. Also promotes the degradation of normal but naturally short-lived proteins such as SGK. Protects cells from ER stress-induced apoptosis. Sequesters p53/TP53 in the cytoplasm and promotes its degradation, thereby negatively regulating its biological function in transcription, cell cycle regulation and apoptosis. Required for embryogenesis. Mediates the ubiquitination and subsequent degradation of cytoplasmic NFE2L1. During the early stage of B cell development, required for degradation of the pre-B cell receptor (pre-BCR) complex, hence supporting further differentiation into mature B cells. This chain is E3 ubiquitin-protein ligase synoviolin (Syvn1), found in Mus musculus (Mouse).